Reading from the N-terminus, the 257-residue chain is Photosystem I chlorophyll a/b-binding protein 2, chloroplastic (257 aa).

The N-terminal 43 residues, 1-43 (MASSLCASSAIAAISSPSFLGGKKLRLKKKLTVPAVSRPDASV), are a transit peptide targeting the chloroplast. W55 contacts chlorophyll b. Chlorophyll a contacts are provided by F75, S81, and E94. R99 provides a ligand contact to chlorophyll b. 2 helical membrane passes run 100-120 (WAML…IGIL) and 133-153 (YFTD…WAEG). Residues E152 and R155 each contribute to the chlorophyll b site. Residues K208, E209, N212, R214, Q226, and H241 each contribute to the chlorophyll a site. Residues 215–235 (LAMLAVMGAWFQHIYTGTGPI) form a helical membrane-spanning segment.

This sequence belongs to the light-harvesting chlorophyll a/b-binding (LHC) protein family. The LHC complex consists of chlorophyll a-b binding proteins. Red-emitting heterodimers with LHCA3 and LHCA5. Binds to carotenoids. Binds at least 14 chlorophylls (8 Chl-a and 6 Chl-b) and carotenoids such as lutein and neoxanthin. serves as cofactor. Post-translationally, photoregulated by reversible phosphorylation of its threonine residues.

It is found in the plastid. It localises to the chloroplast thylakoid membrane. The light-harvesting complex (LHC) functions as a light receptor, it captures and delivers excitation energy to photosystems with which it is closely associated, here photosystem I. The sequence is that of Photosystem I chlorophyll a/b-binding protein 2, chloroplastic from Arabidopsis thaliana (Mouse-ear cress).